A 131-amino-acid polypeptide reads, in one-letter code: Profilin-A (131 aa).

This sequence belongs to the profilin family. As to quaternary structure, occurs in many kinds of cells as a complex with monomeric actin in a 1:1 ratio.

It localises to the cytoplasm. The protein localises to the cytoskeleton. In terms of biological role, binds to actin and affects the structure of the cytoskeleton. At high concentrations, profilin prevents the polymerization of actin, whereas it enhances it at low concentrations. By binding to PIP2, it inhibits the formation of IP3 and DG. May serve as a modulator in pollen germination and pollen tube growth. The chain is Profilin-A from Oryza sativa subsp. japonica (Rice).